Consider the following 819-residue polypeptide: Leucine--tRNA ligase (819 aa).

The short motif at 40 to 51 is the 'HIGH' region element; the sequence is PYPSGAGLHVGH. A 'KMSKS' region motif is present at residues 600–604; sequence KMSKS. Position 603 (lysine 603) interacts with ATP.

The protein belongs to the class-I aminoacyl-tRNA synthetase family.

Its subcellular location is the cytoplasm. It carries out the reaction tRNA(Leu) + L-leucine + ATP = L-leucyl-tRNA(Leu) + AMP + diphosphate. The polypeptide is Leucine--tRNA ligase (Chlamydia trachomatis serovar L2 (strain ATCC VR-902B / DSM 19102 / 434/Bu)).